The primary structure comprises 61 residues: Beta-insect depressant toxin BotIT5 (61 aa).

The region spanning 1-61 is the LCN-type CS-alpha/beta domain; the sequence is DGYIRKRDGC…TWKSETNTCG (61 aa). 4 cysteine pairs are disulfide-bonded: Cys-10/Cys-60, Cys-14/Cys-35, Cys-21/Cys-42, and Cys-25/Cys-44. Gly-61 bears the Glycine amide mark.

This sequence belongs to the long (4 C-C) scorpion toxin superfamily. Sodium channel inhibitor family. Beta subfamily. In terms of tissue distribution, expressed by the venom gland.

It is found in the secreted. In terms of biological role, depressant insect beta-toxins cause a transient contraction paralysis followed by a slow flaccid paralysis. They bind voltage-independently at site-4 of sodium channels (Nav) and shift the voltage of activation toward more negative potentials thereby affecting sodium channel activation and promoting spontaneous and repetitive firing. This toxin is active only on insects. In Buthus occitanus tunetanus (Common European scorpion), this protein is Beta-insect depressant toxin BotIT5.